The primary structure comprises 94 residues: (2R)-sulfolactate sulfo-lyase subunit alpha (94 aa).

In terms of domain architecture, AFP-like spans 16–90 (VVVVEGVEAG…GEHVHVHNVK (75 aa)).

In terms of assembly, (2R)-sulfolactate sulfo-lyase is composed of a SuyA and a SuyB subunit.

The protein localises to the cytoplasm. It carries out the reaction (2R)-3-sulfolactate = sulfite + pyruvate + H(+). Functionally, together with SuyB, desulfonates sulfolactate to pyruvate and sulfite. This Chromohalobacter salexigens (strain ATCC BAA-138 / DSM 3043 / CIP 106854 / NCIMB 13768 / 1H11) protein is (2R)-sulfolactate sulfo-lyase subunit alpha (suyA).